The chain runs to 302 residues: MDQKRLTHLRQLEAESIHIIREVAAEFSNPVMLYSIGKDSSVMLHLARKAFYPGTLPFPLLHVDTGWKFREMYEFRDRTAKAYGCELLVHKNPEGVAMGINPFVHGSAKHTDIMKTEGLKQALNKYGFDAAFGGARRDEEKSRAKERIYSFRDRFHRWDPKNQRPELWHNYNGQINKGESIRVFPLSNWTEQDIWQYIWLENIDIVPLYLAAERPVLERDGMLMMIDDNRINLQPGEVIKKRMVRFRTLGCWPLTGAVESNAQTLPEIIEEMLVSTTSERQGRVIDRDQAGSMELKKRQGYF.

This sequence belongs to the PAPS reductase family. CysD subfamily. Heterodimer composed of CysD, the smaller subunit, and CysN.

It catalyses the reaction sulfate + ATP + H(+) = adenosine 5'-phosphosulfate + diphosphate. The protein operates within sulfur metabolism; hydrogen sulfide biosynthesis; sulfite from sulfate: step 1/3. In terms of biological role, with CysN forms the ATP sulfurylase (ATPS) that catalyzes the adenylation of sulfate producing adenosine 5'-phosphosulfate (APS) and diphosphate, the first enzymatic step in sulfur assimilation pathway. APS synthesis involves the formation of a high-energy phosphoric-sulfuric acid anhydride bond driven by GTP hydrolysis by CysN coupled to ATP hydrolysis by CysD. This Escherichia coli O6:K15:H31 (strain 536 / UPEC) protein is Sulfate adenylyltransferase subunit 2.